Reading from the N-terminus, the 188-residue chain is UPF0301 protein Smal_0940 (188 aa).

Belongs to the UPF0301 (AlgH) family.

In Stenotrophomonas maltophilia (strain R551-3), this protein is UPF0301 protein Smal_0940.